Reading from the N-terminus, the 230-residue chain is uncharacterized protein (230 aa).

A signal peptide spans 1–21; the sequence is MARYDARLRGIGKAHACSAFA. The interval 47–190 is disordered; that stretch reads SASVQENFIA…TVQTSSSGDP (144 aa). Positions 141 to 150 are enriched in polar residues; the sequence is PQSQTSANSQ. The span at 151 to 165 shows a compositional bias: basic and acidic residues; that stretch reads KKPEIRCRERSKNAR. Residues 173–188 show a composition bias toward polar residues; the sequence is AVATNEAETVQTSSSG.

This sequence to R.meliloti RA0936 and y4aO.

This is an uncharacterized protein from Sinorhizobium fredii (strain NBRC 101917 / NGR234).